The chain runs to 238 residues: Ribosomal RNA small subunit methyltransferase G (238 aa).

Residues Gly-78, Phe-83, 129-130, and Arg-148 contribute to the S-adenosyl-L-methionine site; that span reads AE. The segment at 217-238 is disordered; it reads KKKETPKKYPRKAGTPAKSPIK.

It belongs to the methyltransferase superfamily. RNA methyltransferase RsmG family.

It localises to the cytoplasm. In terms of biological role, specifically methylates the N7 position of a guanine in 16S rRNA. The chain is Ribosomal RNA small subunit methyltransferase G from Lactococcus lactis subsp. cremoris (strain MG1363).